Consider the following 588-residue polypeptide: Catechol oxidase B, chloroplastic (588 aa).

The N-terminal 88 residues, 1-88 (SSSSTTTIPL…AANLAPLASA (88 aa)), are a transit peptide targeting the chloroplast. 2 cysteine pairs are disulfide-bonded: Cys-99–Cys-115 and Cys-114–Cys-181. Cu cation-binding residues include His-180, His-198, His-207, His-329, His-333, and His-364. Positions 184-198 (CNGAYKVGGKELQVH) form a cross-link, 2'-(S-cysteinyl)-histidine (Cys-His).

Belongs to the tyrosinase family. Cu(2+) is required as a cofactor.

The protein resides in the plastid. Its subcellular location is the chloroplast thylakoid lumen. The catalysed reaction is 2 catechol + O2 = 2 1,2-benzoquinone + 2 H2O. Catalyzes the oxidation of mono- and o-diphenols to o-diquinones. This Solanum tuberosum (Potato) protein is Catechol oxidase B, chloroplastic.